The primary structure comprises 313 residues: tRNA dimethylallyltransferase (313 aa).

11–18 (GPTASGKT) contacts ATP. A substrate-binding site is contributed by 13 to 18 (TASGKT). Interaction with substrate tRNA regions lie at residues 36 to 39 (DSRQ) and 160 to 164 (QRLIR).

Belongs to the IPP transferase family. Monomer. Mg(2+) serves as cofactor.

The catalysed reaction is adenosine(37) in tRNA + dimethylallyl diphosphate = N(6)-dimethylallyladenosine(37) in tRNA + diphosphate. Its function is as follows. Catalyzes the transfer of a dimethylallyl group onto the adenine at position 37 in tRNAs that read codons beginning with uridine, leading to the formation of N6-(dimethylallyl)adenosine (i(6)A). This Chlorobaculum parvum (strain DSM 263 / NCIMB 8327) (Chlorobium vibrioforme subsp. thiosulfatophilum) protein is tRNA dimethylallyltransferase.